The sequence spans 1072 residues: DNA-directed RNA polymerase subunit beta (1072 aa).

The protein belongs to the RNA polymerase beta chain family. In plastids the minimal PEP RNA polymerase catalytic core is composed of four subunits: alpha, beta, beta', and beta''. When a (nuclear-encoded) sigma factor is associated with the core the holoenzyme is formed, which can initiate transcription.

The protein resides in the plastid. The protein localises to the chloroplast. It catalyses the reaction RNA(n) + a ribonucleoside 5'-triphosphate = RNA(n+1) + diphosphate. In terms of biological role, DNA-dependent RNA polymerase catalyzes the transcription of DNA into RNA using the four ribonucleoside triphosphates as substrates. This Lemna minor (Common duckweed) protein is DNA-directed RNA polymerase subunit beta.